Reading from the N-terminus, the 78-residue chain is Pancreatic polypeptide prohormone (78 aa).

Residues 1 to 19 form the signal peptide; sequence LLLSTCVALLLQPPLGALG. Residue Tyr-55 is modified to Tyrosine amide.

It belongs to the NPY family.

The protein localises to the secreted. Its function is as follows. Hormone secreted by pancreatic cells that acts as a regulator of pancreatic and gastrointestinal functions probably by signaling through the G protein-coupled receptor NPY4R2. This chain is Pancreatic polypeptide prohormone (PPY), found in Ovis aries (Sheep).